Reading from the N-terminus, the 352-residue chain is Deoxyhypusine synthase-like protein (352 aa).

The protein belongs to the deoxyhypusine synthase family.

In Coxiella burnetii (strain Dugway 5J108-111), this protein is Deoxyhypusine synthase-like protein.